The primary structure comprises 952 residues: Probable outer membrane protein pmp16 (952 aa).

The signal sequence occupies residues 1–27 (MSKTPPKFLFYLGNFTACMFGMTPAVY). One can recognise an Autotransporter domain in the interval 646 to 952 (GDLATTPLWQ…HLQAGSTLKF (307 aa)).

It belongs to the PMP outer membrane protein family.

Its subcellular location is the secreted. It is found in the cell wall. The protein resides in the cell outer membrane. This Chlamydia pneumoniae (Chlamydophila pneumoniae) protein is Probable outer membrane protein pmp16 (pmp16).